A 559-amino-acid chain; its full sequence is Putative ankyrin repeat protein RBE_0902 (559 aa).

ANK repeat units follow at residues 11 to 40, 46 to 75, 81 to 110, 158 to 189, 228 to 257, 263 to 292, 298 to 327, 333 to 364, 372 to 402, and 524 to 554; these read DGWT…EQAI, DGNT…DQAI, DGNT…TKQN, DDWT…VINH, NNDT…DQAI, YGNT…EQAI, QCDT…AINC, FGFT…EVII, and IDNN…WGLE.

The sequence is that of Putative ankyrin repeat protein RBE_0902 from Rickettsia bellii (strain RML369-C).